Reading from the N-terminus, the 118-residue chain is Large ribosomal subunit protein uL18 (118 aa).

This sequence belongs to the universal ribosomal protein uL18 family. In terms of assembly, part of the 50S ribosomal subunit; part of the 5S rRNA/L5/L18/L25 subcomplex. Contacts the 5S and 23S rRNAs.

Functionally, this is one of the proteins that bind and probably mediate the attachment of the 5S RNA into the large ribosomal subunit, where it forms part of the central protuberance. This is Large ribosomal subunit protein uL18 from Acidobacterium capsulatum (strain ATCC 51196 / DSM 11244 / BCRC 80197 / JCM 7670 / NBRC 15755 / NCIMB 13165 / 161).